The chain runs to 358 residues: MKLLLAGGGTGGHLFPAVALAQRLLEQDSEAQVQFVGTARGIEARVLPEQGWPLELIDIRGFVNQGLLGKLRMIPCLIRSVWQGLCILRKFQPDVVLGVGGYASAPMLVAARLKRIPTVIHEQNAWPGLTNRLLGPWARCVCLSFSEAERAFHRAATIVTGNPLRKGMEGCPPMDGDAPELLVFGGSRGARAINDAMLEALPRLEPWKDRLRIVHQTGGDDLQRIREGYARAGWPQESVVPFIDDMAAAYARAHLVVCRAGATTLAELAACGRAAILIPYPHAAADHQTVNARAMAKKGAGLVLAQQNLTPETLASLITDLLENRPRLISMSAAAKSLGITGAADRILRVCRNVCGQD.

UDP-N-acetyl-alpha-D-glucosamine-binding positions include 10-12 (TGG), Asn124, Arg165, Ser187, Ile243, and Gln288.

The protein belongs to the glycosyltransferase 28 family. MurG subfamily.

It localises to the cell inner membrane. The catalysed reaction is di-trans,octa-cis-undecaprenyl diphospho-N-acetyl-alpha-D-muramoyl-L-alanyl-D-glutamyl-meso-2,6-diaminopimeloyl-D-alanyl-D-alanine + UDP-N-acetyl-alpha-D-glucosamine = di-trans,octa-cis-undecaprenyl diphospho-[N-acetyl-alpha-D-glucosaminyl-(1-&gt;4)]-N-acetyl-alpha-D-muramoyl-L-alanyl-D-glutamyl-meso-2,6-diaminopimeloyl-D-alanyl-D-alanine + UDP + H(+). It participates in cell wall biogenesis; peptidoglycan biosynthesis. Functionally, cell wall formation. Catalyzes the transfer of a GlcNAc subunit on undecaprenyl-pyrophosphoryl-MurNAc-pentapeptide (lipid intermediate I) to form undecaprenyl-pyrophosphoryl-MurNAc-(pentapeptide)GlcNAc (lipid intermediate II). This chain is UDP-N-acetylglucosamine--N-acetylmuramyl-(pentapeptide) pyrophosphoryl-undecaprenol N-acetylglucosamine transferase, found in Syntrophotalea carbinolica (strain DSM 2380 / NBRC 103641 / GraBd1) (Pelobacter carbinolicus).